The chain runs to 156 residues: uncharacterized protein (156 aa).

A signal peptide spans 1–22; it reads MFGKVSSLLVFASFLIIQGAFA. A lipid anchor (GPI-anchor amidated serine) is attached at Ser129. A propeptide spans 130–156 (removed in mature form); the sequence is GSPVRFSKSSLLIVSLLSIAAFAALVL.

The protein localises to the cell membrane. This is an uncharacterized protein from Schizosaccharomyces pombe (strain 972 / ATCC 24843) (Fission yeast).